The chain runs to 1129 residues: Phytochrome A type 3 (1129 aa).

Over residues 1–21 (MSSSRPASSSSSRNRQSSQAR) the composition is skewed to low complexity. Positions 1-24 (MSSSRPASSSSSRNRQSSQARVLA) are disordered. In terms of domain architecture, GAF spans 217–402 (SMEVLCNTVV…VFAVHVNREF (186 aa)). Residue Cys322 participates in phytochromobilin binding. 2 consecutive PAS domains span residues 618–688 (VTSE…LQGK) and 748–822 (VEGD…VSLC). Residues 902–1122 (YMRHAINNPL…TFIITAELAS (221 aa)) enclose the Histidine kinase domain.

Belongs to the phytochrome family. In terms of assembly, homodimer. Post-translationally, contains one covalently linked phytochromobilin chromophore.

Functionally, regulatory photoreceptor which exists in two forms that are reversibly interconvertible by light: the Pr form that absorbs maximally in the red region of the spectrum and the Pfr form that absorbs maximally in the far-red region. Photoconversion of Pr to Pfr induces an array of morphogenic responses, whereas reconversion of Pfr to Pr cancels the induction of those responses. Pfr controls the expression of a number of nuclear genes including those encoding the small subunit of ribulose-bisphosphate carboxylase, chlorophyll A/B binding protein, protochlorophyllide reductase, rRNA, etc. It also controls the expression of its own gene(s) in a negative feedback fashion. This chain is Phytochrome A type 3 (PHYA3), found in Avena sativa (Oat).